A 1938-amino-acid polypeptide reads, in one-letter code: Autophagy-related protein 2 homolog A (1938 aa).

The Chorein N-terminal domain maps to 14-111 (ERVCRYLLHH…QLTLQPRRGP (98 aa)). Phosphoserine is present on residues S765, S878, S892, S894, S1266, S1301, and S1309. Positions 1242-1272 (DLHPPPRPPSPTEIAGQKLSESPASLPSCPP) are disordered. The tract at residues 1315 to 1359 (LFPGERSGAPPPSPPVGGPAGSLGSCSEEKEDEREEEGDGDTLDS) is disordered. Positions 1343–1359 (EKEDEREEEGDGDTLDS) are enriched in acidic residues. The WIPI-interacting stretch occupies residues 1358 to 1404 (DSDEFCILDAPGLGIPPRDGEPVVTQLHPGPIVVRDGYFSRPIGSTD). A Phosphoserine modification is found at S1402. Disordered stretches follow at residues 1438-1476 (PHPG…GSGR) and 1614-1657 (GETS…PSPP). A compositionally biased stretch (low complexity) spans 1446 to 1464 (TGLSGPRSSPSRCSGPNRP).

It belongs to the ATG2 family. In terms of assembly, interacts with ATG9A (via C-terminus). Interacts (via WIPI-interacting region) with WDR45B/WIPI3. Interacts (via WIPI-interacting region) with WDR45/WIPI4. Interacts with TMEM41B. Interacts with VMP1.

It localises to the preautophagosomal structure membrane. The protein resides in the lipid droplet. It is found in the endoplasmic reticulum membrane. It carries out the reaction a 1,2-diacyl-sn-glycero-3-phospho-L-serine(in) = a 1,2-diacyl-sn-glycero-3-phospho-L-serine(out). The enzyme catalyses a 1,2-diacyl-sn-glycero-3-phosphoethanolamine(in) = a 1,2-diacyl-sn-glycero-3-phosphoethanolamine(out). In terms of biological role, lipid transfer protein involved in autophagosome assembly. Tethers the edge of the isolation membrane (IM) to the endoplasmic reticulum (ER) and mediates direct lipid transfer from ER to IM for IM expansion. Binds to the ER exit site (ERES), which is the membrane source for autophagosome formation, and extracts phospholipids from the membrane source and transfers them to ATG9 (ATG9A or ATG9B) to the IM for membrane expansion. Lipid transfer activity is enhanced by WIPI1 and WDR45/WIPI4, which promote ATG2A-association with phosphatidylinositol 3-monophosphate (PI3P)-containing membranes. Also regulates lipid droplets morphology and distribution within the cell. In Homo sapiens (Human), this protein is Autophagy-related protein 2 homolog A.